Here is a 346-residue protein sequence, read N- to C-terminus: Deoxyhypusine hydroxylase (346 aa).

HEAT-like PBS-type repeat units follow at residues 71-100 (VLLR…LNDT), 104-133 (LMVR…LNDE), 213-242 (LKLR…LIKD), 246-275 (AIFR…LQNV), and 279-320 (EMVR…SKDA). 3 residues coordinate Fe cation: His75, His108, and Glu109. Residues His250, His283, and Glu284 each contribute to the Fe cation site.

It belongs to the deoxyhypusine hydroxylase family. Requires Fe(2+) as cofactor.

The catalysed reaction is [eIF5A protein]-deoxyhypusine + AH2 + O2 = [eIF5A protein]-hypusine + A + H2O. Its pathway is protein modification; eIF5A hypusination. Catalyzes the hydroxylation of the N(6)-(4-aminobutyl)-L-lysine intermediate produced by deoxyhypusine synthase/DHPS on a critical lysine of the eukaryotic translation initiation factor 5A/eIF-5A. This is the second step of the post-translational modification of that lysine into an unusual amino acid residue named hypusine. Hypusination is unique to mature eIF-5A factor and is essential for its function. This Plasmodium vivax (strain Salvador I) protein is Deoxyhypusine hydroxylase.